Consider the following 391-residue polypeptide: Leucine-rich repeat-containing protein 74B (391 aa).

Positions 1 to 38 (MKGPCEVQKNEDQEGEAAATGPQAETLEAERSWTADSH) are disordered. Residues 28 to 38 (EAERSWTADSH) show a composition bias toward basic and acidic residues. 9 LRR repeats span residues 106–126 (YIKR…EALA), 134–154 (IISD…QAIC), 162–182 (TVEK…QHLA), 190–211 (GLKS…ILGP), 218–239 (GLTE…AFAR), 246–259 (FLKV…GFGD), 274–294 (VLEE…LKLG), 302–323 (TLRI…GLLK), and 332–354 (ALEL…ASSM). Residues 371–391 (KDWPQASTPSQPASAPSDSGL) form a disordered region. The span at 374–391 (PQASTPSQPASAPSDSGL) shows a compositional bias: low complexity.

The polypeptide is Leucine-rich repeat-containing protein 74B (Mus musculus (Mouse)).